We begin with the raw amino-acid sequence, 31 residues long: MESVAYILVLTMTLAVLFFAIAFREPPRIQK.

Residues 3-23 (SVAYILVLTMTLAVLFFAIAF) form a helical membrane-spanning segment.

It belongs to the PsbT family. As to quaternary structure, PSII is composed of 1 copy each of membrane proteins PsbA, PsbB, PsbC, PsbD, PsbE, PsbF, PsbH, PsbI, PsbJ, PsbK, PsbL, PsbM, PsbT, PsbX, PsbY, PsbZ, Psb30/Ycf12, peripheral proteins PsbO, CyanoQ (PsbQ), PsbU, PsbV and a large number of cofactors. It forms dimeric complexes.

The protein localises to the cellular thylakoid membrane. Found at the monomer-monomer interface of the photosystem II (PS II) dimer, plays a role in assembly and dimerization of PSII. PSII is a light-driven water plastoquinone oxidoreductase, using light energy to abstract electrons from H(2)O, generating a proton gradient subsequently used for ATP formation. The protein is Photosystem II reaction center protein T of Rippkaea orientalis (strain PCC 8801 / RF-1) (Cyanothece sp. (strain PCC 8801)).